A 537-amino-acid chain; its full sequence is CTP synthase (537 aa).

An amidoligase domain region spans residues 1–265 (MVHFIFVTGG…DNKVLKFFNI (265 aa)). Residue serine 13 coordinates CTP. Serine 13 is a binding site for UTP. Residues 14 to 19 (SLGKGL) and aspartate 71 each bind ATP. Aspartate 71 and glutamate 139 together coordinate Mg(2+). CTP contacts are provided by residues 146–148 (DIE) and lysine 222. Lysine 222 is a binding site for UTP. Residues 290–536 (RIAIIAKYHK…IKAAIEYNKC (247 aa)) form the Glutamine amidotransferase type-1 domain. L-glutamine is bound at residue glycine 352. The active-site Nucleophile; for glutamine hydrolysis is cysteine 379. Residues 380-383 (FGMQ), glutamate 403, and arginine 464 contribute to the L-glutamine site. Catalysis depends on residues histidine 509 and glutamate 511.

It belongs to the CTP synthase family. As to quaternary structure, homotetramer.

It carries out the reaction UTP + L-glutamine + ATP + H2O = CTP + L-glutamate + ADP + phosphate + 2 H(+). The enzyme catalyses L-glutamine + H2O = L-glutamate + NH4(+). It catalyses the reaction UTP + NH4(+) + ATP = CTP + ADP + phosphate + 2 H(+). It functions in the pathway pyrimidine metabolism; CTP biosynthesis via de novo pathway; CTP from UDP: step 2/2. Allosterically activated by GTP, when glutamine is the substrate; GTP has no effect on the reaction when ammonia is the substrate. The allosteric effector GTP functions by stabilizing the protein conformation that binds the tetrahedral intermediate(s) formed during glutamine hydrolysis. Inhibited by the product CTP, via allosteric rather than competitive inhibition. Catalyzes the ATP-dependent amination of UTP to CTP with either L-glutamine or ammonia as the source of nitrogen. Regulates intracellular CTP levels through interactions with the four ribonucleotide triphosphates. The polypeptide is CTP synthase (Rickettsia peacockii (strain Rustic)).